A 162-amino-acid polypeptide reads, in one-letter code: GTP-dependent dephospho-CoA kinase (162 aa).

6 residues coordinate GTP: aspartate 40, valine 41, valine 42, aspartate 59, lysine 61, and glutamate 111.

Belongs to the GTP-dependent DPCK family.

The enzyme catalyses 3'-dephospho-CoA + GTP = GDP + CoA + H(+). It participates in cofactor biosynthesis; coenzyme A biosynthesis. Catalyzes the GTP-dependent phosphorylation of the 3'-hydroxyl group of dephosphocoenzyme A to form coenzyme A (CoA). The protein is GTP-dependent dephospho-CoA kinase of Sulfurisphaera tokodaii (strain DSM 16993 / JCM 10545 / NBRC 100140 / 7) (Sulfolobus tokodaii).